Consider the following 92-residue polypeptide: Small ribosomal subunit protein bS20 (92 aa).

This sequence belongs to the bacterial ribosomal protein bS20 family.

In terms of biological role, binds directly to 16S ribosomal RNA. The sequence is that of Small ribosomal subunit protein bS20 from Persephonella marina (strain DSM 14350 / EX-H1).